The primary structure comprises 504 residues: Doublesex- and mab-3-related transcription factor A1 (504 aa).

The span at 1 to 13 (MERSQCGSRDRGV) shows a compositional bias: basic and acidic residues. The interval 1-27 (MERSQCGSRDRGVSGRPHLAPGLVVAA) is disordered. Positions 97–144 (CARCRNHGVVSALKGHKRFCRWRDCACAKCTLIAERQRVMAAQVALRR) form a DNA-binding region, DM. Disordered regions lie at residues 170–192 (GRAS…AAGA) and 266–307 (SISE…NESE). Residues 293–306 (RSLSSSDLESGNES) show a composition bias toward low complexity. Positions 327 to 362 (RDPLDILTKIFPNYRRSRLEGILRFCKGDVVQAIEQ) constitute a DMA domain.

It belongs to the DMRT family. Expressed in liver, kidney, pancreas, prostate and weakly detected in testis and ovary.

It localises to the nucleus. This is Doublesex- and mab-3-related transcription factor A1 (DMRTA1) from Homo sapiens (Human).